A 166-amino-acid polypeptide reads, in one-letter code: Small ribosomal subunit protein uS5 (166 aa).

In terms of domain architecture, S5 DRBM spans 12 to 75 (YIEKLVQVNR…EAARRNMIQV (64 aa)).

This sequence belongs to the universal ribosomal protein uS5 family. Part of the 30S ribosomal subunit. Contacts proteins S4 and S8.

Functionally, with S4 and S12 plays an important role in translational accuracy. Its function is as follows. Located at the back of the 30S subunit body where it stabilizes the conformation of the head with respect to the body. This chain is Small ribosomal subunit protein uS5, found in Pseudomonas fluorescens (strain Pf0-1).